The sequence spans 24 residues: KTXATLFPGHGIGPEIXQAVXPIL.

This is Unknown protein NF004 from 2D-PAGE from Naegleria fowleri (Brain eating amoeba).